Reading from the N-terminus, the 327-residue chain is MAISILGAGAWGTAIAISLGSKKDVILWTHNETTFESINGKRESDKLPGCRISDNVSVKLAIEDIINASVTILAVPTQSLRKVCQQLHNCNLKKDVAIILACKGIEKSTLKLPSEIVNEILPNNPIAIFSGPSFAVEVARKLPYSMVLACQNNTLGSKLVSELQQENVKLEFSNDIIGVQICAALKNVFAIACGIVLGSKLGFNAHAALITKSMSEIKALYSAKIGDGSVDINTLLGPACLGDLIMTCTSLNSRNLSFGFKIGNSDNGFNVQQILSEGKSVIEGFSTAESIFNLAGKLKIKMPICEAVYRLLYESASIEDTLSVLIS.

3 residues coordinate NADPH: Trp-11, His-30, and Lys-103. Residues Lys-103, Gly-131, and Ser-133 each contribute to the sn-glycerol 3-phosphate site. Position 135 (Ala-135) interacts with NADPH. The sn-glycerol 3-phosphate site is built by Lys-186, Asp-243, Ser-253, Arg-254, and Asn-255. The Proton acceptor role is filled by Lys-186. Position 254 (Arg-254) interacts with NADPH. NADPH contacts are provided by Val-281 and Glu-283.

Belongs to the NAD-dependent glycerol-3-phosphate dehydrogenase family.

The protein resides in the cytoplasm. It catalyses the reaction sn-glycerol 3-phosphate + NAD(+) = dihydroxyacetone phosphate + NADH + H(+). It carries out the reaction sn-glycerol 3-phosphate + NADP(+) = dihydroxyacetone phosphate + NADPH + H(+). It functions in the pathway membrane lipid metabolism; glycerophospholipid metabolism. In terms of biological role, catalyzes the reduction of the glycolytic intermediate dihydroxyacetone phosphate (DHAP) to sn-glycerol 3-phosphate (G3P), the key precursor for phospholipid synthesis. The chain is Glycerol-3-phosphate dehydrogenase [NAD(P)+] from Wolbachia pipientis wMel.